The following is a 336-amino-acid chain: 4-hydroxy-3-methylbut-2-enyl diphosphate reductase (336 aa).

C37 provides a ligand contact to [4Fe-4S] cluster. The (2E)-4-hydroxy-3-methylbut-2-enyl diphosphate site is built by H66 and H99. Dimethylallyl diphosphate-binding residues include H66 and H99. H66 and H99 together coordinate isopentenyl diphosphate. C121 provides a ligand contact to [4Fe-4S] cluster. H149 provides a ligand contact to (2E)-4-hydroxy-3-methylbut-2-enyl diphosphate. A dimethylallyl diphosphate-binding site is contributed by H149. H149 serves as a coordination point for isopentenyl diphosphate. The active-site Proton donor is the E151. A (2E)-4-hydroxy-3-methylbut-2-enyl diphosphate-binding site is contributed by T189. C219 provides a ligand contact to [4Fe-4S] cluster. Positions 247, 248, 249, and 292 each coordinate (2E)-4-hydroxy-3-methylbut-2-enyl diphosphate. The dimethylallyl diphosphate site is built by S247, S248, N249, and S292. Residues S247, S248, N249, and S292 each contribute to the isopentenyl diphosphate site.

It belongs to the IspH family. The cofactor is [4Fe-4S] cluster.

It carries out the reaction isopentenyl diphosphate + 2 oxidized [2Fe-2S]-[ferredoxin] + H2O = (2E)-4-hydroxy-3-methylbut-2-enyl diphosphate + 2 reduced [2Fe-2S]-[ferredoxin] + 2 H(+). The catalysed reaction is dimethylallyl diphosphate + 2 oxidized [2Fe-2S]-[ferredoxin] + H2O = (2E)-4-hydroxy-3-methylbut-2-enyl diphosphate + 2 reduced [2Fe-2S]-[ferredoxin] + 2 H(+). Its pathway is isoprenoid biosynthesis; dimethylallyl diphosphate biosynthesis; dimethylallyl diphosphate from (2E)-4-hydroxy-3-methylbutenyl diphosphate: step 1/1. It participates in isoprenoid biosynthesis; isopentenyl diphosphate biosynthesis via DXP pathway; isopentenyl diphosphate from 1-deoxy-D-xylulose 5-phosphate: step 6/6. Its function is as follows. Catalyzes the conversion of 1-hydroxy-2-methyl-2-(E)-butenyl 4-diphosphate (HMBPP) into a mixture of isopentenyl diphosphate (IPP) and dimethylallyl diphosphate (DMAPP). Acts in the terminal step of the DOXP/MEP pathway for isoprenoid precursor biosynthesis. The protein is 4-hydroxy-3-methylbut-2-enyl diphosphate reductase of Rhodococcus opacus (strain B4).